The sequence spans 210 residues: TBC1 domain family member 28 (210 aa).

The Rab-GAP TBC domain maps to Val101–Ser210.

The polypeptide is TBC1 domain family member 28 (TBC1D28) (Homo sapiens (Human)).